An 894-amino-acid polypeptide reads, in one-letter code: UPF0182 protein GSU2333 (894 aa).

Transmembrane regions (helical) follow at residues phenylalanine 6–phenylalanine 26, valine 50–phenylalanine 70, methionine 98–glycine 118, lysine 162–phenylalanine 182, leucine 203–valine 223, isoleucine 250–alanine 270, and leucine 275–methionine 295.

The protein belongs to the UPF0182 family.

The protein localises to the cell membrane. This chain is UPF0182 protein GSU2333, found in Geobacter sulfurreducens (strain ATCC 51573 / DSM 12127 / PCA).